The sequence spans 430 residues: Adenylosuccinate synthetase (430 aa).

GTP-binding positions include 12 to 18 and 40 to 42; these read GDEGKGK and GHT. D13 acts as the Proton acceptor in catalysis. D13 and G40 together coordinate Mg(2+). IMP contacts are provided by residues 13–16, 38–41, T128, R142, Q223, T238, and R302; these read DEGK and NAGH. H41 functions as the Proton donor in the catalytic mechanism. 298 to 304 is a binding site for substrate; it reads TVTKRPR. GTP contacts are provided by residues R304, 330-332, and 412-414; these read CVD and SVG.

Belongs to the adenylosuccinate synthetase family. Homodimer. Mg(2+) serves as cofactor.

It localises to the cytoplasm. The enzyme catalyses IMP + L-aspartate + GTP = N(6)-(1,2-dicarboxyethyl)-AMP + GDP + phosphate + 2 H(+). It participates in purine metabolism; AMP biosynthesis via de novo pathway; AMP from IMP: step 1/2. Plays an important role in the de novo pathway of purine nucleotide biosynthesis. Catalyzes the first committed step in the biosynthesis of AMP from IMP. The chain is Adenylosuccinate synthetase from Ligilactobacillus salivarius (strain UCC118) (Lactobacillus salivarius).